Here is a 530-residue protein sequence, read N- to C-terminus: Tetrahydroberberine oxidase (530 aa).

A signal peptide spans 1–24 (MSKMASSIFATFSLLSSLLPTSLA). The cysteines at positions 36 and 94 are disulfide-linked. Residue asparagine 51 is glycosylated (N-linked (GlcNAc...) asparagine). Positions 72–246 (TTPKPNFIVT…LAWKIRLVPV (175 aa)) constitute an FAD-binding PCMH-type domain. The 6-(S-cysteinyl)-8alpha-(pros-histidyl)-FAD (His-Cys) cross-link spans 109-171 (HDFEGLSYVS…GVHAFPAGLC (63 aa)). Residue asparagine 483 is glycosylated (N-linked (GlcNAc...) asparagine).

This sequence belongs to the oxygen-dependent FAD-linked oxidoreductase family. Requires FAD as cofactor. The FAD cofactor is bound via a bicovalent 6-S-cysteinyl, 8alpha-N1-histidyl FAD linkage.

It carries out the reaction (S)-canadine + 2 O2 + H(+) = berberine + 2 H2O2. Catalyzes the oxidation of different tetrahydroprotoberberines, such as (S)-canadine, (S)-scoulerine and (S)-corypalmine. Catalyzes the oxidation of (S)-coreximine and (S)-tetrahydropalmatine. Catalyzes the oxidation of different 1-benzylisoquinoline alkaloids, such as (S)-norreticuline, (S)-nororientaline, (S)-coclaurine and (S)-norisoorientaline. Exhibits strict specificity for the (S)-enantiomer of tetrahydroprotoberbirines and 1-benzylisoquinoline alkaloids. This Berberis wilsoniae (Mrs Wilson's barberry) protein is Tetrahydroberberine oxidase.